A 433-amino-acid polypeptide reads, in one-letter code: ATP-dependent protease ATPase subunit HslU (433 aa).

Residues Ile18, 60 to 65, Asp246, Glu311, and Arg383 each bind ATP; that span reads GVGKTE.

The protein belongs to the ClpX chaperone family. HslU subfamily. A double ring-shaped homohexamer of HslV is capped on each side by a ring-shaped HslU homohexamer. The assembly of the HslU/HslV complex is dependent on binding of ATP.

The protein localises to the cytoplasm. Functionally, ATPase subunit of a proteasome-like degradation complex; this subunit has chaperone activity. The binding of ATP and its subsequent hydrolysis by HslU are essential for unfolding of protein substrates subsequently hydrolyzed by HslV. HslU recognizes the N-terminal part of its protein substrates and unfolds these before they are guided to HslV for hydrolysis. The sequence is that of ATP-dependent protease ATPase subunit HslU from Cereibacter sphaeroides (strain KD131 / KCTC 12085) (Rhodobacter sphaeroides).